Here is a 560-residue protein sequence, read N- to C-terminus: Interferon alpha/beta receptor 1 (560 aa).

An N-terminal signal peptide occupies residues 1 to 24 (MLSLLGATTLMLVAGRWVLPAASG). At 25 to 437 (EANLKSENVE…EKTKPGNTSK (413 aa)) the chain is on the extracellular side. Asn47 and Asn55 each carry an N-linked (GlcNAc...) asparagine glycan. Cys76 and Cys84 are joined by a disulfide. Asn85, Asn108, Asn109, and Asn172 each carry an N-linked (GlcNAc...) asparagine glycan. Fibronectin type-III domains are found at residues 126-226 (QIGP…TTER), 231-329 (SPEN…TEVK), and 333-433 (FPPV…TKPG). The cysteines at positions 199 and 220 are disulfide-linked. N-linked (GlcNAc...) asparagine glycosylation is found at Asn222, Asn285, Asn313, Asn359, and Asn377. The cysteines at positions 283 and 291 are disulfide-linked. An intrachain disulfide couples Cys404 to Cys427. Residue Asn434 is glycosylated (N-linked (GlcNAc...) asparagine). Residues 438–458 (TWLIAGICTALFSILVVIYVV) form a helical membrane-spanning segment. Over 459-560 (RVFLRCVKYV…SEEFLQQDSV (102 aa)) the chain is Cytoplasmic. Cys464 carries the S-palmitoyl cysteine lipid modification. Phosphotyrosine; by TYK2 occurs at positions 467 and 482. The segment at 492–501 (LLSTSEEQTE) is important for interaction with TYK2. Ser496 and Ser536 each carry phosphoserine. The tract at residues 524–560 (VHEEYNSQASQDSGNYSNEDENSGSKISEEFLQQDSV) is disordered. A compositionally biased stretch (polar residues) spans 529–540 (NSQASQDSGNYS).

It belongs to the type II cytokine receptor family. In terms of assembly, heterodimer with IFNAR2; forming the receptor for type I interferon. Interacts with TYK2. Interacts with STAT1 and STAT2; the interaction requires its phosphorylation at Tyr-482. Interacts (serine-phosphorylated form) with FBXW11, the substrate recognition component of a SCF (SKP1-CUL1-F-box protein) E3 ubiquitin-protein ligase complex. Interacts with SHMT2; this promotes interaction with ABRAXAS2 and the BRISC complex. Interacts with TRIM10; this interaction prevents association between IFNAR1 and TYK2. In terms of processing, ubiquitinated, leading to its internalization and degradation. Polyubiquitinated via 'Lys-48'-linked and 'Lys-63'-linked ubiquitin chains, leading to receptor internalization and lysosomal degradation. The 'Lys-63'-linked ubiquitin chains are cleaved off by the BRISC complex. Post-translationally, phosphorylated on tyrosine residues in response to interferon-binding: phosphorylation by TYK2 tyrosine kinase creates docking sites for STAT proteins. Phosphorylated on serine residues in response to interferon binding; this promotes interaction with FBXW11 and ubiquitination. Palmitoylation at Cys-464 is required for the activation of STAT1 and STAT2. As to expression, expressed in the endometrium. Expressed in all tissues examined except conceptus at day 15 of pregnancy.

It localises to the cell membrane. It is found in the late endosome. The protein resides in the lysosome. In terms of biological role, together with IFNAR2, forms the heterodimeric receptor for type I interferons (including interferons alpha, beta, epsilon, omega and kappa). Type I interferon binding activates the JAK-STAT signaling cascade, resulting in transcriptional activation or repression of interferon-regulated genes that encode the effectors of the interferon response. Mechanistically, type I interferon-binding brings the IFNAR1 and IFNAR2 subunits into close proximity with one another, driving their associated Janus kinases (JAKs) (TYK2 bound to IFNAR1 and JAK1 bound to IFNAR2) to cross-phosphorylate one another. The activated kinases phosphorylate specific tyrosine residues on the intracellular domains of IFNAR1 and IFNAR2, forming docking sites for the STAT transcription factors. STAT proteins are then phosphorylated by the JAKs, promoting their translocation into the nucleus to regulate expression of interferon-regulated genes. Can also act independently of IFNAR2: form an active IFNB1 receptor by itself and activate a signaling cascade that does not involve activation of the JAK-STAT pathway. The chain is Interferon alpha/beta receptor 1 (IFNAR1) from Ovis aries (Sheep).